The following is a 326-amino-acid chain: 4-hydroxythreonine-4-phosphate dehydrogenase (326 aa).

Substrate contacts are provided by H130 and T131. Positions 160, 205, and 260 each coordinate a divalent metal cation. Positions 268, 277, and 286 each coordinate substrate.

Belongs to the PdxA family. Homodimer. Zn(2+) is required as a cofactor. The cofactor is Mg(2+). It depends on Co(2+) as a cofactor.

It is found in the cytoplasm. The enzyme catalyses 4-(phosphooxy)-L-threonine + NAD(+) = 3-amino-2-oxopropyl phosphate + CO2 + NADH. It functions in the pathway cofactor biosynthesis; pyridoxine 5'-phosphate biosynthesis; pyridoxine 5'-phosphate from D-erythrose 4-phosphate: step 4/5. Its function is as follows. Catalyzes the NAD(P)-dependent oxidation of 4-(phosphooxy)-L-threonine (HTP) into 2-amino-3-oxo-4-(phosphooxy)butyric acid which spontaneously decarboxylates to form 3-amino-2-oxopropyl phosphate (AHAP). The sequence is that of 4-hydroxythreonine-4-phosphate dehydrogenase from Aromatoleum aromaticum (strain DSM 19018 / LMG 30748 / EbN1) (Azoarcus sp. (strain EbN1)).